A 418-amino-acid polypeptide reads, in one-letter code: Gamma-glutamyl phosphate reductase (418 aa).

The protein belongs to the gamma-glutamyl phosphate reductase family.

It is found in the cytoplasm. The enzyme catalyses L-glutamate 5-semialdehyde + phosphate + NADP(+) = L-glutamyl 5-phosphate + NADPH + H(+). It participates in amino-acid biosynthesis; L-proline biosynthesis; L-glutamate 5-semialdehyde from L-glutamate: step 2/2. Catalyzes the NADPH-dependent reduction of L-glutamate 5-phosphate into L-glutamate 5-semialdehyde and phosphate. The product spontaneously undergoes cyclization to form 1-pyrroline-5-carboxylate. The polypeptide is Gamma-glutamyl phosphate reductase (Pelodictyon phaeoclathratiforme (strain DSM 5477 / BU-1)).